The following is a 194-amino-acid chain: MSQNGAPGMQEESLQGSWVELHFSNNGNGGSVPASVSIYNGDMEKILLDAQHESGRSSSKSSHCDSPPRSQTPQDTNRASETDTHSIGEKNSSQSEEDDIERRKEVESILKKNSDWIWDWSSRPENIPPKEFLFKHPKRTATLSMRNTSVMKKGGIFSAEFLKVFLPSLLLSHLLAIGLGIYIGRRLTTSTSTF.

Residues 1–102 (MSQNGAPGMQ…SQSEEDDIER (102 aa)) are disordered. A compositionally biased stretch (basic and acidic residues) spans 42-55 (DMEKILLDAQHESG). Ser-54, Ser-66, Ser-86, Ser-92, and Ser-95 each carry phosphoserine. Residues 56-69 (RSSSKSSHCDSPPR) show a composition bias toward low complexity. Residues 78 to 88 (RASETDTHSIG) show a composition bias toward basic and acidic residues. A BH3 motif is present at residues 100 to 125 (IERRKEVESILKKNSDWIWDWSSRPE). Residues 164-184 (VFLPSLLLSHLLAIGLGIYIG) form a helical membrane-spanning segment.

The protein belongs to the NIP3 family. As to quaternary structure, homodimer. Binds to BCL2. Interacts with BNIP3L and ACAA2. Interacts (via BH3 domain) with SPATA18 (via coiled-coil domains). Interacts with BOK; promotes BOK oligomerization. Interacts with PPTC7; this interaction promotes BNIP3 degradation. In terms of assembly, (Microbial infection) Interacts with adenovirus E1B 19 kDa protein. (Microbial infection) Interacts with Epstein-Barr virus BHRF1.

The protein localises to the mitochondrion. It localises to the mitochondrion outer membrane. Apoptosis-inducing protein that can overcome BCL2 suppression. May play a role in repartitioning calcium between the two major intracellular calcium stores in association with BCL2. Involved in mitochondrial quality control via its interaction with SPATA18/MIEAP: in response to mitochondrial damage, participates in mitochondrial protein catabolic process (also named MALM) leading to the degradation of damaged proteins inside mitochondria. The physical interaction of SPATA18/MIEAP, BNIP3 and BNIP3L/NIX at the mitochondrial outer membrane regulates the opening of a pore in the mitochondrial double membrane in order to mediate the translocation of lysosomal proteins from the cytoplasm to the mitochondrial matrix. Plays an important role in the calprotectin (S100A8/A9)-induced cell death pathway. In Homo sapiens (Human), this protein is BCL2/adenovirus E1B 19 kDa protein-interacting protein 3.